Consider the following 1291-residue polypeptide: Vacuolating cytotoxin autotransporter (1291 aa).

The N-terminal stretch at 1–33 is a signal peptide; the sequence is MEIQQTHRKINRPLVSLALVGALVSITPQQSHA. The interval 326–374 is disordered; sequence PPEGGYKDKPNDKPSNTTQNNAKNDKQESSQNNSNTQVINPPNSAQKTE. 2 stretches are compositionally biased toward polar residues: residues 338–347 and 354–374; these read KPSNTTQNNA and SSQNNSNTQVINPPNSAQKTE. The Autotransporter domain maps to 1018 to 1291; the sequence is KYEKPTNVWA…ASNLGMRYSF (274 aa).

The protein localises to the periplasm. Its subcellular location is the secreted. It is found in the cell surface. The protein resides in the cell outer membrane. Functionally, induces vacuolation of eukaryotic cells. Causes ulceration and gastric lesions. The protein is Vacuolating cytotoxin autotransporter (vacA) of Helicobacter pylori (Campylobacter pylori).